The primary structure comprises 463 residues: Sodium-coupled neutral amino acid transporter 7 (463 aa).

The residue at position 28 (Ser-28) is a Phosphoserine. 11 helical membrane passes run 56 to 76, 82 to 102, 130 to 150, 179 to 199, 206 to 226, 240 to 260, 283 to 303, 320 to 340, 372 to 392, 396 to 416, and 429 to 449; these read AVFI…PAAF, VAAG…GLVI, LCEV…LIII, FTIS…KEIG, FLSV…YIWP, ASWM…QCHV, AAMV…FLTF, VAVA…YPIL, VLQT…IPDI, ISVI…LCLI, and ASWW…AFIF.

This sequence belongs to the amino acid/polyamine transporter 2 family. As to quaternary structure, interacts with the mTORC1 complex; this interaction mediates the recruitment of mTORC1 to the lysosome and its subsequent activation. Highly expressed in the brain, including the hippocampus, especially in the granular layer of dentate gyrus cells and the pyramidal cell layer of the hippocampus, amygdala, thalamus, hypothalamus, in the layer of Purkinje cells in the cerebellum and the layers of cortex. Particularly strong expression in neurons of the ventromedial hypothalamus, basolateral amygdala, ventral tegmental area, and locus coeruleus. Not detected in glial cells, including astrocytes. In addition to brain, also expressed in the spinal cord (at protein level).

Its subcellular location is the lysosome membrane. The protein localises to the cell projection. It localises to the axon. The enzyme catalyses L-glutamine(in) + Na(+)(in) = L-glutamine(out) + Na(+)(out). It catalyses the reaction L-asparagine(in) + Na(+)(in) = L-asparagine(out) + Na(+)(out). Symporter that selectively cotransports sodium ions and amino acids, such as L-glutamine and L-asparagine from the lysosome into the cytoplasm and may participates in mTORC1 activation. The transport activity requires an acidic lysosomal lumen. The polypeptide is Sodium-coupled neutral amino acid transporter 7 (Mus musculus (Mouse)).